Reading from the N-terminus, the 154-residue chain is Myoglobin-2 (154 aa).

In terms of domain architecture, Globin spans 2-148; it reads GLSDGEWQLV…FRKDIATKYK (147 aa). Residue H65 coordinates nitrite. An O2-binding site is contributed by H65. Heme b is bound at residue H94.

Belongs to the globin family. In terms of assembly, monomeric.

The protein localises to the cytoplasm. It localises to the sarcoplasm. The catalysed reaction is Fe(III)-heme b-[protein] + nitric oxide + H2O = Fe(II)-heme b-[protein] + nitrite + 2 H(+). The enzyme catalyses H2O2 + AH2 = A + 2 H2O. Functionally, monomeric heme protein which primary function is to store oxygen and facilitate its diffusion within muscle tissues. Reversibly binds oxygen through a pentacoordinated heme iron and enables its timely and efficient release as needed during periods of heightened demand. Depending on the oxidative conditions of tissues and cells, and in addition to its ability to bind oxygen, it also has a nitrite reductase activity whereby it regulates the production of bioactive nitric oxide. Under stress conditions, like hypoxia and anoxia, it also protects cells against reactive oxygen species thanks to its pseudoperoxidase activity. This chain is Myoglobin-2 (MB2), found in Stenella attenuata (Pantropical spotted dolphin).